Reading from the N-terminus, the 245-residue chain is Outer membrane protein assembly factor BamD (245 aa).

Positions 1 to 19 (MTRMKYLVAAATLSLFLAG) are cleaved as a signal peptide. Cysteine 20 carries N-palmitoyl cysteine lipidation. Cysteine 20 carries the S-diacylglycerol cysteine lipid modification.

The protein belongs to the BamD family. As to quaternary structure, part of the Bam complex, which is composed of the outer membrane protein BamA, and four lipoproteins BamB, BamC, BamD and BamE.

The protein resides in the cell outer membrane. Its function is as follows. Part of the outer membrane protein assembly complex, which is involved in assembly and insertion of beta-barrel proteins into the outer membrane. Constitutes, with BamA, the core component of the assembly machinery. The chain is Outer membrane protein assembly factor BamD from Escherichia coli O157:H7.